Consider the following 148-residue polypeptide: Protoporphyrinogen IX oxidase (148 aa).

4 consecutive transmembrane segments (helical) span residues 7 to 27, 59 to 79, 86 to 106, and 128 to 148; these read YFLW…AALF, FIAS…LLIA, GGWL…HFYC, and FNEI…VKPF. A heme-binding site is contributed by histidine 15. Residue lysine 92 coordinates heme.

It belongs to the HemJ family. Homodimer. Requires heme b as cofactor.

It localises to the cell membrane. It carries out the reaction protoporphyrinogen IX + 3 A = protoporphyrin IX + 3 AH2. Its pathway is porphyrin-containing compound metabolism; protoporphyrin-IX biosynthesis; protoporphyrin-IX from protoporphyrinogen-IX: step 1/1. Its function is as follows. Catalyzes the oxidation of protoporphyrinogen IX to protoporphyrin IX. Is involved in the biosynthesis of tetrapyrrole molecules like heme. Does not use oxygen or artificial electron acceptors such as menadione or benzoquinone. This chain is Protoporphyrinogen IX oxidase, found in Helicobacter pylori (strain J99 / ATCC 700824) (Campylobacter pylori J99).